A 632-amino-acid polypeptide reads, in one-letter code: Pentatricopeptide repeat-containing protein ELI1, chloroplastic (632 aa).

The transit peptide at 1–19 directs the protein to the chloroplast; the sequence is MASSPLLATSLPQNQLSTT. PPR repeat units follow at residues 94 to 128, 129 to 159, 160 to 194, 196 to 221, 222 to 256, 258 to 292, 293 to 323, 324 to 354, 360 to 395, and 396 to 426; these read DLFL…EINP, NEFT…GLGI, DPYV…SLVS, TAMI…MCER, DIVS…GKPK, DEIT…RIRL, NVKV…TPRK, DIVA…MQGI, TDIT…GIKP, and KIEH…MNMD. Residues 431–506 form a type E motif region; that stretch reads LWSSVLGSCK…EPGISTIEIE (76 aa). Residues 497 to 512 form a required for function in RNA editing region; that stretch reads EPGISTIEIENKVHEF. The segment at 507–537 is type E(+) motif; it reads NKVHEFRAGDREHSKSKEIYTMLRKISERIK. A type DYW motif region spans residues 538–632; that stretch reads SHGYVPNTNT…DGSCSCGDFW (95 aa).

Belongs to the PPR family. PCMP-H subfamily. Requires Zn(2+) as cofactor.

The protein resides in the plastid. The protein localises to the chloroplast. In terms of biological role, plays a major role in single RNA editing events in chloroplasts. Acts as a site-recognition transacting factor involved in the edition of the site 5 of ndhB1 and ndhB2 (ndhB1-5 and ndhB2-5 sites corresponding to cytidine-830), which are plastid-encoded subunits of the NADH-plastoquinone oxidoreductase. May provide the catalytic activity for editing site conversion. This Arabidopsis thaliana (Mouse-ear cress) protein is Pentatricopeptide repeat-containing protein ELI1, chloroplastic.